The primary structure comprises 359 residues: Histamine H2 receptor (359 aa).

Residues 1–22 (MAPNGTASSFCLDSTACKITIT) lie on the Extracellular side of the membrane. Asn4 carries an N-linked (GlcNAc...) asparagine glycan. Residues 23–44 (VVLAVLILITVAGNVVVCLAVG) traverse the membrane as a helical segment. The Cytoplasmic segment spans residues 45–57 (LNRRLRNLTNCFI). Residues 58 to 81 (VSLAITDLLLGLLVLPFSAIYQLS) traverse the membrane as a helical segment. Topologically, residues 82-92 (CKWSFGKVFCN) are extracellular. A disulfide bridge connects residues Cys91 and Cys174. The chain crosses the membrane as a helical span at residues 93 to 114 (IYTSLDVMLCTASILNLFMISL). The Cytoplasmic portion of the chain corresponds to 115–134 (DRYCAVMDPLRYPVLVTPVR). Residues 135 to 159 (VAISLVLIWVISITLSFLSIHLGWN) traverse the membrane as a helical segment. Topologically, residues 160-180 (SRNETSKGNHTTSKCKVQVNE) are extracellular. The chain crosses the membrane as a helical span at residues 181–204 (VYGLVDGLVTFYLPLLIMCITYYR). At 205–234 (IFKVARDQAKRINHISSWKAATIREHKATV) the chain is on the cytoplasmic side. The helical transmembrane segment at 235–258 (TLAAVMGAFIICWFPYFTAFVYRG) threads the bilayer. The Extracellular segment spans residues 259 to 267 (LRGDDAINE). Residues 268–289 (VLEAIVLWLGYANSALNPILYA) traverse the membrane as a helical segment. Over 290 to 359 (ALNRDFRTGY…VTAPQGATDR (70 aa)) the chain is Cytoplasmic. Cys305 is lipidated: S-palmitoyl cysteine. Positions 316 to 340 (SLRSNASQLSRTQSREPRQQEEKPL) are disordered. Residues 317-327 (LRSNASQLSRT) are compositionally biased toward polar residues. The span at 328–340 (QSREPRQQEEKPL) shows a compositional bias: basic and acidic residues.

It belongs to the G-protein coupled receptor 1 family.

The protein localises to the cell membrane. The H2 subclass of histamine receptors mediates gastric acid secretion. Also appears to regulate gastrointestinal motility and intestinal secretion. Possible role in regulating cell growth and differentiation. The activity of this receptor is mediated by G proteins which activate adenylyl cyclase and, through a separate G protein-dependent mechanism, the phosphoinositide/protein kinase (PKC) signaling pathway. This chain is Histamine H2 receptor (HRH2), found in Gorilla gorilla gorilla (Western lowland gorilla).